The sequence spans 273 residues: Phosphatidylglycerol--prolipoprotein diacylglyceryl transferase (273 aa).

A run of 4 helical transmembrane segments spans residues 18-38 (IPVR…YVVG), 47-67 (LPED…IICA), 89-109 (IWNG…TAYI), and 116-136 (VSFL…QIIG). Position 137 (Arg137) interacts with a 1,2-diacyl-sn-glycero-3-phospho-(1'-sn-glycerol). 3 helical membrane passes run 178-198 (VHPT…ILLI), 207-227 (GEIF…IEGM), and 238-258 (LRSA…AIIY).

It belongs to the Lgt family.

It is found in the cell membrane. The catalysed reaction is L-cysteinyl-[prolipoprotein] + a 1,2-diacyl-sn-glycero-3-phospho-(1'-sn-glycerol) = an S-1,2-diacyl-sn-glyceryl-L-cysteinyl-[prolipoprotein] + sn-glycerol 1-phosphate + H(+). The protein operates within protein modification; lipoprotein biosynthesis (diacylglyceryl transfer). Functionally, catalyzes the transfer of the diacylglyceryl group from phosphatidylglycerol to the sulfhydryl group of the N-terminal cysteine of a prolipoprotein, the first step in the formation of mature lipoproteins. The polypeptide is Phosphatidylglycerol--prolipoprotein diacylglyceryl transferase (Lysinibacillus sphaericus (strain C3-41)).